A 203-amino-acid polypeptide reads, in one-letter code: Protein GrpE (203 aa).

This sequence belongs to the GrpE family. In terms of assembly, homodimer.

The protein resides in the cytoplasm. Its function is as follows. Participates actively in the response to hyperosmotic and heat shock by preventing the aggregation of stress-denatured proteins, in association with DnaK and GrpE. It is the nucleotide exchange factor for DnaK and may function as a thermosensor. Unfolded proteins bind initially to DnaJ; upon interaction with the DnaJ-bound protein, DnaK hydrolyzes its bound ATP, resulting in the formation of a stable complex. GrpE releases ADP from DnaK; ATP binding to DnaK triggers the release of the substrate protein, thus completing the reaction cycle. Several rounds of ATP-dependent interactions between DnaJ, DnaK and GrpE are required for fully efficient folding. This is Protein GrpE from Pseudoalteromonas translucida (strain TAC 125).